Here is a 69-residue protein sequence, read N- to C-terminus: UPF0435 protein SH1076 (69 aa).

It belongs to the UPF0435 family.

This Staphylococcus haemolyticus (strain JCSC1435) protein is UPF0435 protein SH1076.